The primary structure comprises 572 residues: Flagellin A (572 aa).

Belongs to the bacterial flagellin family. Heteromer of FlaA and FlaB. Interacts with FliW.

The protein localises to the secreted. It is found in the bacterial flagellum. Flagellin is the subunit protein which polymerizes to form the filaments of bacterial flagella. FlaA binds to flagellar assembly factor FliW protein, preventing FliW from binding to CsrA, so that CsrA can then bind flaA mRNA and represses its translation. The sequence is that of Flagellin A (flaA) from Campylobacter jejuni subsp. jejuni serotype O:2 (strain ATCC 700819 / NCTC 11168).